The primary structure comprises 302 residues: tRNA pseudouridine synthase B (302 aa).

D38 (nucleophile) is an active-site residue.

It belongs to the pseudouridine synthase TruB family. Type 1 subfamily.

It catalyses the reaction uridine(55) in tRNA = pseudouridine(55) in tRNA. Its function is as follows. Responsible for synthesis of pseudouridine from uracil-55 in the psi GC loop of transfer RNAs. The sequence is that of tRNA pseudouridine synthase B from Geobacillus thermodenitrificans (strain NG80-2).